The sequence spans 292 residues: NAD kinase (292 aa).

The Proton acceptor role is filled by Asp73. Residues 73 to 74, 147 to 148, His158, Arg175, Asp177, 188 to 193, and Gln247 each bind NAD(+); these read DG, NE, and TAYSLS.

This sequence belongs to the NAD kinase family. Requires a divalent metal cation as cofactor.

The protein localises to the cytoplasm. It catalyses the reaction NAD(+) + ATP = ADP + NADP(+) + H(+). In terms of biological role, involved in the regulation of the intracellular balance of NAD and NADP, and is a key enzyme in the biosynthesis of NADP. Catalyzes specifically the phosphorylation on 2'-hydroxyl of the adenosine moiety of NAD to yield NADP. The chain is NAD kinase from Enterobacter sp. (strain 638).